Reading from the N-terminus, the 113-residue chain is FK506-binding protein 1B (113 aa).

The PPIase FKBP-type domain occupies 19–113 (GQTVVIEYTG…IFDVYLKGLQ (95 aa)).

It belongs to the FKBP-type PPIase family. FKBP1 subfamily.

It is found in the cytoplasm. The enzyme catalyses [protein]-peptidylproline (omega=180) = [protein]-peptidylproline (omega=0). Its activity is regulated as follows. Inhibited by both FK506 and rapamycin. Its function is as follows. PPIases accelerate the folding of proteins. It catalyzes the cis-trans isomerization of proline imidic peptide bonds in oligopeptides. The protein is FK506-binding protein 1B (fkr-3) of Neurospora crassa (strain ATCC 24698 / 74-OR23-1A / CBS 708.71 / DSM 1257 / FGSC 987).